The primary structure comprises 244 residues: NAD(P)H-hydrate epimerase (244 aa).

Positions 35–240 constitute a YjeF N-terminal domain; it reads IREIDSLAME…SIGVPLELLR (206 aa). A (6S)-NADPHX-binding site is contributed by 82–86; that stretch reads NNGGD. Positions 83 and 150 each coordinate K(+). (6S)-NADPHX-binding positions include 154–160, Tyr165, and Asp183; that span reads GTGAKPP. Thr186 provides a ligand contact to K(+).

The protein belongs to the NnrE/AIBP family. K(+) is required as a cofactor.

It carries out the reaction (6R)-NADHX = (6S)-NADHX. The enzyme catalyses (6R)-NADPHX = (6S)-NADPHX. Catalyzes the epimerization of the S- and R-forms of NAD(P)HX, a damaged form of NAD(P)H that is a result of enzymatic or heat-dependent hydration. This is a prerequisite for the S-specific NAD(P)H-hydrate dehydratase to allow the repair of both epimers of NAD(P)HX. The polypeptide is NAD(P)H-hydrate epimerase (Rhodopirellula baltica (strain DSM 10527 / NCIMB 13988 / SH1)).